Consider the following 845-residue polypeptide: Matrin-3 (845 aa).

Residue serine 2 is modified to N-acetylserine. Lysine 3 is modified (N6-acetyllysine; alternate). A Glycyl lysine isopeptide (Lys-Gly) (interchain with G-Cter in SUMO2); alternate cross-link involves residue lysine 3. A phosphoserine mark is found at serine 4, serine 9, serine 14, serine 22, serine 41, serine 118, and serine 126. Glycyl lysine isopeptide (Lys-Gly) (interchain with G-Cter in SUMO2) cross-links involve residues lysine 132 and lysine 146. 2 disordered regions span residues 147–174 and 187–213; these read RRRTEEGPTLSYGRDGRSATREPPYRVP and DSFDDRGPSLNPVLDYDHGSRSQESGY. Threonine 150 carries the post-translational modification Phosphothreonine. Serine 157 carries the post-translational modification Phosphoserine. Tyrosine 158 is modified (phosphotyrosine). Positions 160–174 are enriched in basic and acidic residues; it reads RDGRSATREPPYRVP. Phosphoserine occurs at positions 164, 188, and 195. The segment covering 201–213 has biased composition (basic and acidic residues); that stretch reads DYDHGSRSQESGY. Tyrosine 202 carries the phosphotyrosine modification. Phosphoserine occurs at positions 206, 208, and 211. Position 219 is a phosphotyrosine (tyrosine 219). Serine 234 carries the post-translational modification Phosphoserine. Lysine 245 is covalently cross-linked (Glycyl lysine isopeptide (Lys-Gly) (interchain with G-Cter in SUMO2)). Serine 264 is subject to Phosphoserine. A Glycyl lysine isopeptide (Lys-Gly) (interchain with G-Cter in SUMO2) cross-link involves residue lysine 269. A Phosphoserine modification is found at serine 275. The disordered stretch occupies residues 342–394; it reads PFMLQQSTNPAPGILGPPPPSFHLGGPAVGPRGNLGAGNGNLQGPRHMQKGRV. The 76-residue stretch at 398–473 folds into the RRM 1 domain; the sequence is RVVHIMDFQR…KPVRVHLSQK (76 aa). Glycyl lysine isopeptide (Lys-Gly) (interchain with G-Cter in SUMO2) cross-links involve residues lysine 478, lysine 487, and lysine 491. Positions 496–571 constitute an RRM 2 domain; that stretch reads RVIHLSNLPH…RCVKVDLSEK (76 aa). 2 positions are modified to phosphoserine: serine 509 and serine 511. A Glycyl lysine isopeptide (Lys-Gly) (interchain with G-Cter in SUMO2) cross-link involves residue lysine 515. Lysine 522 is subject to N6-acetyllysine; alternate. Residue lysine 522 forms a Glycyl lysine isopeptide (Lys-Gly) (interchain with G-Cter in SUMO2); alternate linkage. Position 533 is a phosphoserine (serine 533). Glycyl lysine isopeptide (Lys-Gly) (interchain with G-Cter in SUMO2) cross-links involve residues lysine 554 and lysine 555. N6-acetyllysine is present on lysine 571. The interval 588-785 is disordered; that stretch reads KKDKSRKRSY…EYRIGPYQPN (198 aa). Serine 596, serine 598, serine 604, and serine 606 each carry phosphoserine. Positions 600–643 are enriched in basic and acidic residues; it reads DGKESPSDKKSKTDGAQKTENPAEGKEQEEKSGEDGEKDTKDDQ. Glycyl lysine isopeptide (Lys-Gly) (interchain with G-Cter in SUMO2) cross-links involve residues lysine 617 and lysine 630. The segment covering 653–665 has biased composition (acidic residues); it reads ESEDELLVDEEEA. Serine 654, serine 671, serine 673, and serine 674 each carry phosphoserine. Threonine 679 is subject to Phosphothreonine. Phosphoserine is present on serine 689. Over residues 689–704 the composition is skewed to basic and acidic residues; sequence SDGKKEPSDKAVKKDA. The short motif at 708-716 is the Nuclear localization signal element; sequence SKKKLKKVD. Residues lysine 717 and lysine 734 each participate in a glycyl lysine isopeptide (Lys-Gly) (interchain with G-Cter in SUMO2) cross-link. Threonine 739 is modified (phosphothreonine). Phosphoserine occurs at positions 745, 757, and 760. Positions 765–778 are enriched in basic and acidic residues; sequence DENKEDYTIPDEYR. Lysine 768 is covalently cross-linked (Glycyl lysine isopeptide (Lys-Gly) (interchain with G-Cter in SUMO2)). The Matrin-type zinc-finger motif lies at 799 to 830; it reads FYCKLCSLFYTNEEVAKNTHCSSLPHYQKLKK. Lysine 834 is modified (N6-acetyllysine; alternate). Lysine 834 participates in a covalent cross-link: Glycyl lysine isopeptide (Lys-Gly) (interchain with G-Cter in SUMO2); alternate.

Part of a complex consisting of SFPQ, NONO and MATR3. Interacts with AGO1 and AGO2. Part of a complex composed at least of ASH2L, EMSY, HCFC1, HSPA8, CCAR2, MATR3, MKI67, RBBP5, TUBB2A, WDR5 and ZNF335; this complex may have a histone H3-specific methyltransferase activity. Interacts with TARDBP. Part of the HDP-RNP complex composed of at least HEXIM1, PRKDC, XRCC5, XRCC6, paraspeckle proteins (SFPQ, NONO, PSPC1, RBM14, and MATR3) and NEAT1 RNA. Interacts with FUS. Interacts with IGF2BP1. Interacts with IGF2BP2 and IGF2BP3. Interacts with RBPMS.

It localises to the nucleus matrix. Functionally, may play a role in transcription or may interact with other nuclear matrix proteins to form the internal fibrogranular network. In association with the SFPQ-NONO heteromer may play a role in nuclear retention of defective RNAs. Plays a role in the regulation of DNA virus-mediated innate immune response by assembling into the HDP-RNP complex, a complex that serves as a platform for IRF3 phosphorylation and subsequent innate immune response activation through the cGAS-STING pathway. Binds to N6-methyladenosine (m6A)-containing mRNAs and contributes to MYC stability by binding to m6A-containing MYC mRNAs. May bind to specific miRNA hairpins. In Rattus norvegicus (Rat), this protein is Matrin-3 (Matr3).